Here is a 162-residue protein sequence, read N- to C-terminus: CASP-like protein BLE3 (162 aa).

At 1 to 7 the chain is on the cytoplasmic side; it reads MAKVHRL. Residues 8-28 traverse the membrane as a helical segment; it reads MNAVLRLAAAAAAATAAVVMV. Residues 29-50 lie on the Extracellular side of the membrane; the sequence is TSRETTSFFGIQMEAKYSYTPS. Residues 51 to 71 traverse the membrane as a helical segment; it reads FIFFVVAYAVAAAYSLLVLAV. Residues 72–85 are Cytoplasmic-facing; the sequence is PAGSALSRLALTTD. The chain crosses the membrane as a helical span at residues 86–106; sequence VVLGMVLAGAVASAGAISDIA. Residues 107-128 are Extracellular-facing; that stretch reads KNGNSHAGWLPVCGQIHAYCNH. Residues 129–149 form a helical membrane-spanning segment; sequence VMAALIAGFVALAVHFVVVMY. The Cytoplasmic segment spans residues 150–162; sequence SLHIVTDVICPCH.

The protein belongs to the Casparian strip membrane proteins (CASP) family. In terms of assembly, homodimer and heterodimers.

The protein localises to the cell membrane. In terms of biological role, involved in cell elongation in rice through dual regulation by brassinolide and auxin. This Oryza sativa subsp. indica (Rice) protein is CASP-like protein BLE3 (BLE3).